The sequence spans 122 residues: Large ribosomal subunit protein uL14 (122 aa).

The protein belongs to the universal ribosomal protein uL14 family. In terms of assembly, part of the 50S ribosomal subunit. Forms a cluster with proteins L3 and L19. In the 70S ribosome, L14 and L19 interact and together make contacts with the 16S rRNA in bridges B5 and B8.

Its function is as follows. Binds to 23S rRNA. Forms part of two intersubunit bridges in the 70S ribosome. The protein is Large ribosomal subunit protein uL14 of Endomicrobium trichonymphae.